Here is a 115-residue protein sequence, read N- to C-terminus: Phosphoribosyl-AMP cyclohydrolase (115 aa).

Mg(2+) is bound at residue Asp80. Cys81 lines the Zn(2+) pocket. Mg(2+) contacts are provided by Asp82 and Asp84. The Zn(2+) site is built by Cys97 and Cys104.

The protein belongs to the PRA-CH family. As to quaternary structure, homodimer. Mg(2+) is required as a cofactor. The cofactor is Zn(2+).

It is found in the cytoplasm. It catalyses the reaction 1-(5-phospho-beta-D-ribosyl)-5'-AMP + H2O = 1-(5-phospho-beta-D-ribosyl)-5-[(5-phospho-beta-D-ribosylamino)methylideneamino]imidazole-4-carboxamide. Its pathway is amino-acid biosynthesis; L-histidine biosynthesis; L-histidine from 5-phospho-alpha-D-ribose 1-diphosphate: step 3/9. Catalyzes the hydrolysis of the adenine ring of phosphoribosyl-AMP. The polypeptide is Phosphoribosyl-AMP cyclohydrolase (Mycobacterium avium (strain 104)).